Reading from the N-terminus, the 482-residue chain is MKFIIKLFPEITIKSQSVRLRFIKILTGNIRNVLKHYDETLAVVRHWDNIEVRAKDENQRLAIRDALTRIPGIHHILEVEDVPFTDMHDIFEKALAQYREQLEGKTFCVRVKRRGKHEFSSIEVERYVGGGLNQHIESARVKLTNPDVTVHLEVEDDRLLLIKGRYEGIGGFPIGTQEDVLSLISGGFDSGVSSYMLMRRGCRVHYCFFNLGGAAHEIGVRQVAHYLWNRFGSSHRVRFVAINFEPVVGEILEKVDDGQMGVVLKRMMVRAASKVAERYGVQALVTGEALGQVSSQTLTNLRLIDNVSDTLILRPLISYDKEHIINLARQIGTEDFARTMPEYCGVISKSPTVKAIKAKIEAEEENFDFSILDKVVEEANNVDIREIAQQTQQEVVEVETVSGFGANDVILDIRSVDEQDDKPLKVEGVDVVSLPFYKLSTKFGDLDQSKTWLLWCERGVMSRLQALYLREQGFANVKVYRP.

The THUMP domain occupies 61-165 (LAIRDALTRI…DDRLLLIKGR (105 aa)). Residues 183-184 (LI), lysine 265, glycine 287, and glutamine 296 contribute to the ATP site. An intrachain disulfide couples cysteine 344 to cysteine 456. The 79-residue stretch at 404–482 (FGANDVILDI…GFANVKVYRP (79 aa)) folds into the Rhodanese domain. Cysteine 456 functions as the Cysteine persulfide intermediate in the catalytic mechanism.

Belongs to the ThiI family.

The protein resides in the cytoplasm. The enzyme catalyses [ThiI sulfur-carrier protein]-S-sulfanyl-L-cysteine + a uridine in tRNA + 2 reduced [2Fe-2S]-[ferredoxin] + ATP + H(+) = [ThiI sulfur-carrier protein]-L-cysteine + a 4-thiouridine in tRNA + 2 oxidized [2Fe-2S]-[ferredoxin] + AMP + diphosphate. It carries out the reaction [ThiS sulfur-carrier protein]-C-terminal Gly-Gly-AMP + S-sulfanyl-L-cysteinyl-[cysteine desulfurase] + AH2 = [ThiS sulfur-carrier protein]-C-terminal-Gly-aminoethanethioate + L-cysteinyl-[cysteine desulfurase] + A + AMP + 2 H(+). It participates in cofactor biosynthesis; thiamine diphosphate biosynthesis. Functionally, catalyzes the ATP-dependent transfer of a sulfur to tRNA to produce 4-thiouridine in position 8 of tRNAs, which functions as a near-UV photosensor. Also catalyzes the transfer of sulfur to the sulfur carrier protein ThiS, forming ThiS-thiocarboxylate. This is a step in the synthesis of thiazole, in the thiamine biosynthesis pathway. The sulfur is donated as persulfide by IscS. The chain is tRNA sulfurtransferase from Salmonella agona (strain SL483).